The following is a 343-amino-acid chain: Small ribosomal subunit biogenesis GTPase RsgA (343 aa).

Residues 116–275 (RGQLKPVAAN…LIDSPGIREF (160 aa)) enclose the CP-type G domain. GTP contacts are provided by residues 163-166 (NKAD) and 217-225 (GQSGVGKSS). Residues cysteine 299, cysteine 304, histidine 306, and cysteine 312 each contribute to the Zn(2+) site.

It belongs to the TRAFAC class YlqF/YawG GTPase family. RsgA subfamily. In terms of assembly, monomer. Associates with 30S ribosomal subunit, binds 16S rRNA. It depends on Zn(2+) as a cofactor.

It localises to the cytoplasm. One of several proteins that assist in the late maturation steps of the functional core of the 30S ribosomal subunit. Helps release RbfA from mature subunits. May play a role in the assembly of ribosomal proteins into the subunit. Circularly permuted GTPase that catalyzes slow GTP hydrolysis, GTPase activity is stimulated by the 30S ribosomal subunit. This is Small ribosomal subunit biogenesis GTPase RsgA from Azotobacter vinelandii (strain DJ / ATCC BAA-1303).